The chain runs to 319 residues: Cell surface A33 antigen (319 aa).

Residues 1 to 21 (MVGKMWPVLWTLCAVRVTVDA) form the signal peptide. Residues 22–134 (ISVETPQDVL…LEGNTKSRVR (113 aa)) form the Ig-like V-type domain. At 22 to 235 (ISVETPQDVL…VAVRSPSMNV (214 aa)) the chain is on the extracellular side. Disulfide bonds link cysteine 43–cysteine 117, cysteine 146–cysteine 222, and cysteine 162–cysteine 211. N-linked (GlcNAc...) asparagine glycosylation is found at asparagine 112, asparagine 200, and asparagine 223. An Ig-like C2-type domain is found at 140 to 227 (PPSKPECGIE…GTQFCNITVA (88 aa)). Residues 236–256 (ALYVGIAVGVVAALIIIGIII) traverse the membrane as a helical segment. Topologically, residues 257 to 319 (YCCCCRGKDD…GRESPDHLDQ (63 aa)) are cytoplasmic. 2 stretches are compositionally biased toward basic and acidic residues: residues 267 to 295 (NTED…SRER) and 303 to 319 (QEEQ…HLDQ). Residues 267-319 (NTEDKEDARPNREAYEEPPEQLRELSREREEEDDYRQEEQRSTGRESPDHLDQ) are disordered.

Post-translationally, N-glycosylated, contains approximately 8 kDa of N-linked carbohydrate. In terms of processing, palmitoylated. As to expression, expressed in normal gastrointestinal epithelium and in 95% of colon cancers.

Its subcellular location is the membrane. In terms of biological role, may play a role in cell-cell recognition and signaling. The chain is Cell surface A33 antigen (GPA33) from Homo sapiens (Human).